The chain runs to 496 residues: Glycerol kinase (496 aa).

T12 contacts ADP. Residues T12, T13, and S14 each contribute to the ATP site. Sn-glycerol 3-phosphate is bound at residue T12. An ADP-binding site is contributed by R16. Residues R82, E83, and Y134 each coordinate sn-glycerol 3-phosphate. Positions 82, 83, and 134 each coordinate glycerol. The residue at position 230 (H230) is a Phosphohistidine; by HPr. A sn-glycerol 3-phosphate-binding site is contributed by D244. 2 residues coordinate glycerol: D244 and Q245. Positions 266 and 309 each coordinate ADP. T266, G309, Q313, and G410 together coordinate ATP. Residues G410 and N414 each contribute to the ADP site.

It belongs to the FGGY kinase family. Homotetramer and homodimer (in equilibrium). In terms of processing, the phosphoenolpyruvate-dependent sugar phosphotransferase system (PTS), including enzyme I, and histidine-containing protein (HPr) are required for the phosphorylation, which leads to the activation of the enzyme.

It carries out the reaction glycerol + ATP = sn-glycerol 3-phosphate + ADP + H(+). Its pathway is polyol metabolism; glycerol degradation via glycerol kinase pathway; sn-glycerol 3-phosphate from glycerol: step 1/1. Its activity is regulated as follows. Activated by phosphorylation and inhibited by fructose 1,6-bisphosphate (FBP). Its function is as follows. Key enzyme in the regulation of glycerol uptake and metabolism. Catalyzes the phosphorylation of glycerol to yield sn-glycerol 3-phosphate. This Bacillus licheniformis (strain ATCC 14580 / DSM 13 / JCM 2505 / CCUG 7422 / NBRC 12200 / NCIMB 9375 / NCTC 10341 / NRRL NRS-1264 / Gibson 46) protein is Glycerol kinase.